Here is a 421-residue protein sequence, read N- to C-terminus: ATP-dependent RNA helicase eIF4A (421 aa).

Positions 1-26 (MSNDKGLEEIPEDQSTTPHKPTSNVG) are disordered. Polar residues predominate over residues 13–26 (DQSTTPHKPTSNVG). A Q motif motif is present at residues 48 to 76 (DSFDAMELKPELLRGVYAYGFERPSAIQQ). A Helicase ATP-binding domain is found at 79-249 (IKPIIKGSDV…TKFMRDPVRI (171 aa)). 92 to 99 (AQSGTGKT) is an ATP binding site. Positions 197–200 (DEAD) match the DEAD box motif. The 162-residue stretch at 260–421 (GIKQFYIAVE…EMPMNVADLI (162 aa)) folds into the Helicase C-terminal domain.

It belongs to the DEAD box helicase family. eIF4A subfamily. Component of the eIF4F complex, which composition varies with external and internal environmental conditions. It is composed of at least eIF4A, eIF4E and eIF4G.

It localises to the cytoplasm. The enzyme catalyses ATP + H2O = ADP + phosphate + H(+). Functionally, ATP-dependent RNA helicase which is a subunit of the eIF4F complex involved in cap recognition and is required for mRNA binding to ribosome. In the current model of translation initiation, eIF4A unwinds RNA secondary structures in the 5'-UTR of mRNAs which is necessary to allow efficient binding of the small ribosomal subunit, and subsequent scanning for the initiator codon. This Aspergillus oryzae (strain ATCC 42149 / RIB 40) (Yellow koji mold) protein is ATP-dependent RNA helicase eIF4A (tif1).